Reading from the N-terminus, the 563-residue chain is Nigrin b (563 aa).

A signal peptide spans 1–25 (MRVVAAAMLYFYIVVLAICSVGIQG). E188 is a catalytic residue. A glycan (N-linked (GlcNAc...) asparagine) is linked at N221. Cystine bridges form between C274–C302, C319–C338, and C360–C377. 2 Ricin B-type lectin domains span residues 305 to 431 (RTSF…WTVT) and 434 to 559 (VKPI…WVTQ). The 1-alpha repeat unit spans residues 316–356 (DGLCVDVRNGYDTDGTPLQLWPCGTQRNQRWTFDSDDTIRS). The stretch at 357–397 (MGKCMTANGLNNGSNIVIFNCSTAAENAIKWEVPIDGSIIN) is one 1-beta repeat. N-linked (GlcNAc...) asparagine glycosylation is found at N368 and N376. The stretch at 400-432 (SGLVMTAPRAASRTILLLEDNIYAASQGWTVTN) is one 1-gamma repeat. The 2-alpha repeat unit spans residues 445-482 (KEMCLQSNGENNGVWMEDCEATSLQQQWALYGDRTIRV). The cysteines at positions 448 and 463 are disulfide-linked. N483 is a glycosylation site (N-linked (GlcNAc...) asparagine). One copy of the 2-beta repeat lies at 486–524 (RGLCVTTNGYNSKDLIIILKCQGLPSQRWFFNSDGAIVN). C489 and C506 form a disulfide bridge. A 2-gamma repeat occupies 527 to 554 (SRHVMDVRASNVSLREIIIFPATGNPNQ). N537 is a glycosylation site (N-linked (GlcNAc...) asparagine).

It in the N-terminal section; belongs to the ribosome-inactivating protein family. Type 2 RIP subfamily. Disulfide-linked dimer of A and B chains.

The catalysed reaction is Endohydrolysis of the N-glycosidic bond at one specific adenosine on the 28S rRNA.. Functionally, non-toxic type 2 RIP which strongly inhibits mammalian protein synthesis but does not affect plant nor bacterial protein synthesis. The A chain is responsible for inhibiting protein synthesis through the catalytic inactivation of 60S ribosomal subunits by removing adenine from position 4,324 of 28S rRNA. Its function is as follows. The B chain is a galactose-specific lectin that facilitates the binding of nigrin b to the cell membrane that precedes endocytosis. This is Nigrin b from Sambucus nigra (European elder).